The primary structure comprises 62 residues: MKPDEIKALSADEAKQKLVELKAAYFNLRFRHETGQLDNTSMLEKTKKDIARVKTVLSAYNR.

The protein belongs to the universal ribosomal protein uL29 family.

This chain is Large ribosomal subunit protein uL29, found in Desulfosudis oleivorans (strain DSM 6200 / JCM 39069 / Hxd3) (Desulfococcus oleovorans).